The primary structure comprises 186 residues: Protein SPMIP2 (186 aa).

Residues 163–186 (SSLPRASKPPKLPKLPKKEKKRKH) are disordered. Basic residues predominate over residues 176–186 (KLPKKEKKRKH).

This Homo sapiens (Human) protein is Protein SPMIP2.